Reading from the N-terminus, the 139-residue chain is Small ribosomal subunit protein uS12 (139 aa).

A disordered region spans residues 12–55 (RVDKVKKSDSPALNKGYNSFKKSQTDVSSPQKRGVCTRVGTMTP). A compositionally biased stretch (polar residues) spans 27-42 (GYNSFKKSQTDVSSPQ). D102 carries the 3-methylthioaspartic acid modification. The tract at residues 119–139 (GVQNRMQGRSKYGTKKPKDKK) is disordered. Residues 130–139 (YGTKKPKDKK) show a composition bias toward basic residues.

It belongs to the universal ribosomal protein uS12 family. Part of the 30S ribosomal subunit. Contacts proteins S8 and S17. May interact with IF1 in the 30S initiation complex.

Its function is as follows. With S4 and S5 plays an important role in translational accuracy. Interacts with and stabilizes bases of the 16S rRNA that are involved in tRNA selection in the A site and with the mRNA backbone. Located at the interface of the 30S and 50S subunits, it traverses the body of the 30S subunit contacting proteins on the other side and probably holding the rRNA structure together. The combined cluster of proteins S8, S12 and S17 appears to hold together the shoulder and platform of the 30S subunit. In Shouchella clausii (strain KSM-K16) (Alkalihalobacillus clausii), this protein is Small ribosomal subunit protein uS12.